A 250-amino-acid polypeptide reads, in one-letter code: tRNA (guanine-N(1)-)-methyltransferase (250 aa).

Residues glycine 116 and 136-141 (IGDYVL) contribute to the S-adenosyl-L-methionine site.

Belongs to the RNA methyltransferase TrmD family. In terms of assembly, homodimer.

Its subcellular location is the cytoplasm. It carries out the reaction guanosine(37) in tRNA + S-adenosyl-L-methionine = N(1)-methylguanosine(37) in tRNA + S-adenosyl-L-homocysteine + H(+). Functionally, specifically methylates guanosine-37 in various tRNAs. This Pseudomonas fluorescens (strain SBW25) protein is tRNA (guanine-N(1)-)-methyltransferase.